Reading from the N-terminus, the 288-residue chain is Glycine--tRNA ligase alpha subunit (288 aa).

The protein belongs to the class-II aminoacyl-tRNA synthetase family. In terms of assembly, tetramer of two alpha and two beta subunits.

The protein resides in the cytoplasm. It catalyses the reaction tRNA(Gly) + glycine + ATP = glycyl-tRNA(Gly) + AMP + diphosphate. This Rickettsia canadensis (strain McKiel) protein is Glycine--tRNA ligase alpha subunit.